We begin with the raw amino-acid sequence, 545 residues long: ATP synthase subunit alpha (545 aa).

173 to 180 (GDRKTGKT) contacts ATP.

The protein belongs to the ATPase alpha/beta chains family. In terms of assembly, F-type ATPases have 2 components, CF(1) - the catalytic core - and CF(0) - the membrane proton channel. CF(1) has five subunits: alpha(3), beta(3), gamma(1), delta(1), epsilon(1). CF(0) has three main subunits: a(1), b(2) and c(9-12). The alpha and beta chains form an alternating ring which encloses part of the gamma chain. CF(1) is attached to CF(0) by a central stalk formed by the gamma and epsilon chains, while a peripheral stalk is formed by the delta and b chains.

It is found in the cell membrane. The catalysed reaction is ATP + H2O + 4 H(+)(in) = ADP + phosphate + 5 H(+)(out). Produces ATP from ADP in the presence of a proton gradient across the membrane. The alpha chain is a regulatory subunit. In Renibacterium salmoninarum (strain ATCC 33209 / DSM 20767 / JCM 11484 / NBRC 15589 / NCIMB 2235), this protein is ATP synthase subunit alpha.